A 254-amino-acid chain; its full sequence is Low affinity immunoglobulin gamma Fc region receptor III-A (254 aa).

The N-terminal stretch at 1–20 (MWQLLLPTALLLLVSAGMRA) is a signal peptide. At 21–206 (EDLPKAVVFL…SSISSFFPPG (186 aa)) the chain is on the extracellular side. 2 consecutive Ig-like C2-type domains span residues 24 to 105 (PKAV…LEVH) and 107 to 189 (GWLL…VNIT). Intrachain disulfides connect Cys-47-Cys-89 and Cys-128-Cys-172. The N-linked (GlcNAc...) asparagine glycan is linked to Asn-187. The chain crosses the membrane as a helical span at residues 207–229 (YQVSFCLVMVLLFAVDTGLYFSV). Over 230-254 (KKSVPSSTRDWEDHKFKWSKDPQDK) the chain is Cytoplasmic.

As to quaternary structure, forms a heterooligomeric complex with ITAM-containing signaling subunits, either a homodimer of CD247, a homodimer of FCER1G or a heterodimer of CD247 and FCER1G, to form a functional receptor complex. Interacts (via transmembrane domain) with signaling subunits; this interaction is a prerequisite for receptor complex expression on the cell surface and intracellular signal transduction. Binds the Fc region of antigen-complexed IgG with a preference for IgG1 and IgG3 isotypes. Interacts with CD2; this interaction is involved in NK cell activation and cytotoxicity. Interacts with S100A4; this interaction inhibits PKC-dependent phosphorylation of FCGR3A. In terms of processing, glycosylated. Glycosylation plays an inhibitory role in the interaction with IgG1 and IgG2. Post-translationally, undergoes rapid ectodomain shedding upon NK cell stimulation. The soluble form is produced by a proteolytic cleavage mediated by ADAM17. Repeated stimulation causes receptor shedding, a mechanism that allows for increased NK cell motility and detachment from opsonized target cells while avoiding activation-induced NK cell apoptosis. In terms of tissue distribution, lymphocytes and monocytes.

It localises to the cell membrane. The protein localises to the secreted. Receptor for the invariable Fc fragment of immunoglobulin gamma (IgG). Optimally activated upon binding of clustered antigen-IgG complexes displayed on cell surfaces, triggers lysis of antibody-coated cells, a process known as antibody-dependent cellular cytotoxicity (ADCC). Does not bind free monomeric IgG, thus avoiding inappropriate effector cell activation in the absence of antigenic trigger. Mediates IgG effector functions on natural killer (NK) cells. Binds antigen-IgG complexes generated upon infection and triggers NK cell-dependent cytokine production and degranulation to limit viral load and propagation. Involved in the generation of memory-like adaptive NK cells capable to produce high amounts of IFNG and to efficiently eliminate virus-infected cells via ADCC. Regulates NK cell survival and proliferation, in particular by preventing NK cell progenitor apoptosis. Fc-binding subunit that associates with CD247 and/or FCER1G adapters to form functional signaling complexes. Following the engagement of antigen-IgG complexes, triggers phosphorylation of immunoreceptor tyrosine-based activation motif (ITAM)-containing adapters with subsequent activation of phosphatidylinositol 3-kinase signaling and sustained elevation of intracellular calcium that ultimately drive NK cell activation. The ITAM-dependent signaling coupled to receptor phosphorylation by PKC mediates robust intracellular calcium flux that leads to production of pro-inflammatory cytokines, whereas in the absence of receptor phosphorylation it mainly activates phosphatidylinositol 3-kinase signaling leading to cell degranulation. Costimulates NK cells and trigger lysis of target cells independently of IgG binding. Mediates the antitumor activities of therapeutic antibodies. Upon ligation on monocytes triggers TNFA-dependent ADCC of IgG-coated tumor cells. Mediates enhanced ADCC in response to afucosylated IgGs. This chain is Low affinity immunoglobulin gamma Fc region receptor III-A, found in Macaca mulatta (Rhesus macaque).